The following is a 320-amino-acid chain: Chorion protein S36 (320 aa).

Positions 1–18 (MNCFLFTLFFVAAPLATA) are cleaved as a signal peptide. 5 repeat units span residues 178–181 (AAPV), 258–261 (AAPA), 266–269 (AAPA), 274–277 (AAPA), and Ala-290. A disordered region spans residues 259 to 320 (APAQSYNAAP…YGSAPPASGY (62 aa)).

It belongs to the chorion protein S36 family.

It localises to the secreted. Functionally, chorion membrane (egg shell) protein; plays a role in protecting the egg from the environment. This is Chorion protein S36 (Cp36) from Ceratitis capitata (Mediterranean fruit fly).